A 236-amino-acid chain; its full sequence is Apoptosis regulator Bcl-2 (236 aa).

The BH4 signature appears at 10–30; it reads DNREIVMKYIHYKLSQRGYEW. A Phosphothreonine; by MAPK8 modification is found at threonine 69. Serine 70 bears the Phosphoserine; by MAPK8 and PKC mark. Serine 84 carries the post-translational modification Phosphoserine; by MAPK8. Residues 90–104 carry the BH3 motif; the sequence is VHLTLRRAGDDFSRR. Residues 133–152 carry the BH1 motif; the sequence is ELFRDGVNWGRIVAFFEFGG. The BH2 signature appears at 184 to 199; the sequence is TWIQDNGGWDAFVELY. The helical transmembrane segment at 209 to 230 threads the bilayer; the sequence is FSWLSLKTLLSLALVGACITLG.

This sequence belongs to the Bcl-2 family. In terms of assembly, forms homodimers, and heterodimers with BAX, BAD, BAK and Bcl-X(L). Heterodimerization with BAX requires intact BH1 and BH2 motifs, and is necessary for anti-apoptotic activity. Component of the complex, at least composed of LRPPRC, BECN1 and BCL2; the interactions prevent BECN1 from forming an autophagy-inducing complex with PIK3C3. Interacts with EI24. Also interacts with APAF1, BBC3, BCL2L1, BNIPL, MRPL41 and TP53BP2. Binding to FKBP8 seems to target BCL2 to the mitochondria and probably interferes with the binding of BCL2 to its targets. Interacts with BAG1 in an ATP-dependent manner. Interacts with RAF1 (the 'Ser-338' and 'Ser-339' phosphorylated form). Interacts (via the BH4 domain) with EGLN3; the interaction prevents the formation of the BAX-BCL2 complex and inhibits the anti-apoptotic activity of BCL2. Interacts with G0S2; this interaction also prevents the formation of the anti-apoptotic BAX-BCL2 complex. Interacts with RTL10/BOP. Interacts with the SCF(FBXO10) complex. Interacts (via the loop between motifs BH4 and BH3) with NLRP1 (via LRR repeats), but not with NLRP2, NLRP3, NLRP4, PYCARD, nor MEFV. Interacts with GIMAP3/IAN4, GIMAP4/IAN1 and GIMAP5/IAN5. Interacts with BCAP31. Interacts with IRF3; the interaction is inhibited by Sendai virus infection. Interacts with BECN1; thereby inhibiting autophagy in non-starvation conditions. Interacts with AMBRA1; thereby inhibiting autophagy. Post-translationally, phosphorylation/dephosphorylation on Ser-70 regulates anti-apoptotic activity. Growth factor-stimulated phosphorylation on Ser-70 by PKC is required for the anti-apoptosis activity and occurs during the G2/M phase of the cell cycle. In the absence of growth factors, BCL2 appears to be phosphorylated by other protein kinases such as ERKs and stress-activated kinases. Phosphorylated by MAPK8/JNK1 at Thr-69, Ser-70 and Ser-84, which stimulates starvation-induced autophagy. Dephosphorylated by protein phosphatase 2A (PP2A). In terms of processing, proteolytically cleaved by caspases during apoptosis. The cleaved protein, lacking the BH4 motif, has pro-apoptotic activity, causes the release of cytochrome c into the cytosol promoting further caspase activity. Monoubiquitinated by PRKN, leading to an increase in its stability. Ubiquitinated by SCF(FBXO10), leading to its degradation by the proteasome.

The protein resides in the mitochondrion outer membrane. Its subcellular location is the nucleus membrane. It is found in the endoplasmic reticulum membrane. It localises to the cytoplasm. Functionally, suppresses apoptosis in a variety of cell systems including factor-dependent lymphohematopoietic and neural cells. Regulates cell death by controlling the mitochondrial membrane permeability. Appears to function in a feedback loop system with caspases. Inhibits caspase activity either by preventing the release of cytochrome c from the mitochondria and/or by binding to the apoptosis-activating factor (APAF-1). Also acts as an inhibitor of autophagy: interacts with BECN1 and AMBRA1 during non-starvation conditions and inhibits their autophagy function. May attenuate inflammation by impairing NLRP1-inflammasome activation, hence CASP1 activation and IL1B release. This is Apoptosis regulator Bcl-2 (BCL2) from Cricetulus griseus (Chinese hamster).